A 106-amino-acid polypeptide reads, in one-letter code: Hydrogenase expression/formation protein HoxL (106 aa).

Belongs to the HupF/HypC family.

The polypeptide is Hydrogenase expression/formation protein HoxL (hoxL) (Azotobacter vinelandii).